The chain runs to 158 residues: MENQKQYPMTQEGFEKLEHELEELKTVKRPEVVEKIKIARSFGDLSENSEYDAAKDEQGFIEQDIQRVENMLRNALIIEDTGNNNEVQLGKTVTIVELPGEEEEEYQIVGSAESDAFKGKISNESPMAKSLIGKKLDDEVRVPLPNGGEINVKIVNIK.

A coiled-coil region spans residues 4 to 75 (QKQYPMTQEG…QRVENMLRNA (72 aa)).

This sequence belongs to the GreA/GreB family.

Necessary for efficient RNA polymerase transcription elongation past template-encoded arresting sites. The arresting sites in DNA have the property of trapping a certain fraction of elongating RNA polymerases that pass through, resulting in locked ternary complexes. Cleavage of the nascent transcript by cleavage factors such as GreA or GreB allows the resumption of elongation from the new 3'terminus. GreA releases sequences of 2 to 3 nucleotides. The chain is Transcription elongation factor GreA from Staphylococcus saprophyticus subsp. saprophyticus (strain ATCC 15305 / DSM 20229 / NCIMB 8711 / NCTC 7292 / S-41).